The following is a 195-amino-acid chain: Orotate phosphoribosyltransferase (195 aa).

Residues R87, K91, and 112-120 (DDVATTGGS) each bind 5-phospho-alpha-D-ribose 1-diphosphate. Residues T116 and R144 each coordinate orotate.

The protein belongs to the purine/pyrimidine phosphoribosyltransferase family. PyrE subfamily. As to quaternary structure, homodimer. Mg(2+) is required as a cofactor.

It catalyses the reaction orotidine 5'-phosphate + diphosphate = orotate + 5-phospho-alpha-D-ribose 1-diphosphate. The protein operates within pyrimidine metabolism; UMP biosynthesis via de novo pathway; UMP from orotate: step 1/2. Functionally, catalyzes the transfer of a ribosyl phosphate group from 5-phosphoribose 1-diphosphate to orotate, leading to the formation of orotidine monophosphate (OMP). The chain is Orotate phosphoribosyltransferase from Sulfurisphaera tokodaii (strain DSM 16993 / JCM 10545 / NBRC 100140 / 7) (Sulfolobus tokodaii).